Reading from the N-terminus, the 336-residue chain is Transmembrane protein 120A (336 aa).

Over 1-131 the chain is Cytoplasmic; it reads MNSPALQDCV…KQSKFAYKDE (131 aa). Residue Lys129 participates in CoA binding. A helical membrane pass occupies residues 132 to 151; it reads YEKFKLYLTMILMVLSFICR. At 152 to 157 the chain is on the extracellular side; sequence FVLNSR. A helical transmembrane segment spans residues 158–176; sequence VTDAVFNFLLVWYYCTLTI. Residues 177–189 lie on the Cytoplasmic side of the membrane; the sequence is RESILINNGSRIK. Ser186 and Arg187 together coordinate CoA. The helical transmembrane segment at 190 to 208 threads the bilayer; that stretch reads GWWVLNHYISTFLSGVMLT. The Extracellular segment spans residues 209 to 217; sequence WPDGLMYQM. The helical transmembrane segment at 218 to 239 threads the bilayer; the sequence is FRNQFLSFSMYQSFVQFLQYYY. Residues Gln236, Tyr239, and Gln240 each contribute to the CoA site. Topologically, residues 240-269 are cytoplasmic; sequence QSGCLYRLRALGERHNMDLTVEGFQSWMWR. The helical transmembrane segment at 270 to 293 threads the bilayer; it reads GLTFLLPFLFFGQFWQLYNAITLF. Topologically, residues 294–303 are extracellular; sequence KLARHPECKE. A helical transmembrane segment spans residues 304 to 329; it reads WQVIMCGLPFLVHFLGNFFTTLRVVH. Residues 330 to 336 are Cytoplasmic-facing; that stretch reads QKFQKQN. Residue Lys331 participates in CoA binding.

The protein belongs to the TMEM120 family. In terms of assembly, homodimer.

The protein localises to the cell membrane. It is found in the nucleus inner membrane. Its subcellular location is the endoplasmic reticulum. In terms of biological role, multifunctional protein involved in mechanosensation, and plays an essential role in lipid metabolism. May function as a potential ion channel involved in sensing mechanical stimuli. TMEM120A is structurally similar to a lipid-modifying enzyme, ELOVL7, and contains a bound coenzyme A molecule, which suggests it might function as an enzyme in lipid metabolism. This is Transmembrane protein 120A from Xenopus tropicalis (Western clawed frog).